The sequence spans 322 residues: Uracil-DNA glycosylase (322 aa).

The active-site Proton acceptor is Asp142.

This sequence belongs to the uracil-DNA glycosylase (UDG) superfamily. UNG family.

The protein localises to the mitochondrion. Its subcellular location is the nucleus. It catalyses the reaction Hydrolyzes single-stranded DNA or mismatched double-stranded DNA and polynucleotides, releasing free uracil.. Excises uracil residues from the DNA which can arise as a result of misincorporation of dUMP residues by DNA polymerase or due to deamination of cytosine. This is Uracil-DNA glycosylase (ung1) from Schizosaccharomyces pombe (strain 972 / ATCC 24843) (Fission yeast).